Consider the following 344-residue polypeptide: Krueppel-like factor 3 (344 aa).

The segment at 1 to 74 (MLMFDPVPVK…TVNKRGSPPA (74 aa)) is repressor domain. Residue K10 forms a Glycyl lysine isopeptide (Lys-Gly) (interchain with G-Cter in SUMO) linkage. Residues 60–68 (EPVDLTVNK) carry the 9aaTAD; inactive motif. The CTBP-binding motif signature appears at 61 to 65 (PVDLT). A disordered region spans residues 66-111 (VNKRGSPPAAGGSPSSLKFPSHRRASPGLSMPSSSPPIKKYSPPSP). K68 participates in a covalent cross-link: Glycyl lysine isopeptide (Lys-Gly) (interchain with G-Cter in SUMO2). 2 stretches are compositionally biased toward low complexity: residues 70 to 81 (GSPPAAGGSPSS) and 91 to 107 (SPGLSMPSSSPPIKKYS). 5 positions are modified to phosphoserine: S71, S91, S100, S107, and S110. K195 participates in a covalent cross-link: Glycyl lysine isopeptide (Lys-Gly) (interchain with G-Cter in SUMO2). Residue K197 forms a Glycyl lysine isopeptide (Lys-Gly) (interchain with G-Cter in SUMO); alternate linkage. A Glycyl lysine isopeptide (Lys-Gly) (interchain with G-Cter in SUMO2); alternate cross-link involves residue K197. A phosphoserine mark is found at S215, S223, and S249. The disordered stretch occupies residues 235–254 (SVIVQPGKRPLPVESPDTQR). 3 C2H2-type zinc fingers span residues 259–283 (HRCDYDGCNKVYTKSSHLKAHRRTH), 289–313 (YKCTWEGCTWKFARSDELTRHFRKH), and 319–341 (FQCPDCDRSFSRSDHLALHRKRH).

This sequence belongs to the krueppel C2H2-type zinc-finger protein family. Monomer. In terms of processing, sumoylated with SUMO1. Sumoylation is enhanced by PIAS1, PIAS2alpha and PIAS2beta, and PIAS4, but not by Pc2. Enhances transcriptional repression, but has no effect on DNA binding. Sumoylation on Lys-197 is the major site. In terms of tissue distribution, in 8.5 day embryos, expressed in midbrain, anterior hindbrain and ventral forebrain. In 9 day embryos, expressed throughout ventral anterior half of embryo including midbrain-hindbrain junction, ventral midbrain, diencephalon and forebrain. At 10.5 days, distribution is more widespread with expression also found in developing limb buds. Widely expressed in the adult.

The protein localises to the nucleus. In terms of biological role, binds to the CACCC box of erythroid cell-expressed genes. May play a role in hematopoiesis. The sequence is that of Krueppel-like factor 3 (Klf3) from Mus musculus (Mouse).